The chain runs to 943 residues: Protein translocase subunit SecA (943 aa).

ATP-binding positions include Gln-90, 108 to 112, and Asp-509; that span reads GEGKT. The disordered stretch occupies residues 534–561; sequence KPDNEHKPPIPQQRNSKSGGGFSANVDS.

Belongs to the SecA family. In terms of assembly, monomer and homodimer. Part of the essential Sec protein translocation apparatus which comprises SecA, SecYEG and auxiliary proteins SecDF. Other proteins may also be involved.

Its subcellular location is the cell inner membrane. The protein localises to the cellular thylakoid membrane. It localises to the cytoplasm. The enzyme catalyses ATP + H2O + cellular proteinSide 1 = ADP + phosphate + cellular proteinSide 2.. Functionally, part of the Sec protein translocase complex. Interacts with the SecYEG preprotein conducting channel. Has a central role in coupling the hydrolysis of ATP to the transfer of proteins into and across the cell membrane, serving as an ATP-driven molecular motor driving the stepwise translocation of polypeptide chains across the membrane. Its function is as follows. Probably participates in protein translocation into and across both the cytoplasmic and thylakoid membranes in cyanobacterial cells. The protein is Protein translocase subunit SecA of Prochlorococcus marinus subsp. pastoris (strain CCMP1986 / NIES-2087 / MED4).